A 248-amino-acid chain; its full sequence is E3 SUMO-protein ligase NSE2 (248 aa).

Methionine 1 bears the N-acetylmethionine mark. Glycyl lysine isopeptide (Lys-Gly) (interchain with G-Cter in SUMO2) cross-links involve residues lysine 92 and lysine 109. Position 118 is a phosphoserine (serine 118). Residues lysine 127 and lysine 132 each participate in a glycyl lysine isopeptide (Lys-Gly) (interchain with G-Cter in SUMO2) cross-link. An SP-RING-type zinc finger spans residues 156-242 (VDEDMIVTQS…LRRAIESHKK (87 aa)). Zn(2+) is bound by residues cysteine 187, histidine 189, cysteine 212, and cysteine 217.

This sequence belongs to the NSE2 family. In terms of assembly, component of the SMC5-SMC6 complex which consists at least of SMC5, SMC6, NSMCE2, NSMCE1, NSMCE4A or EID3 and NSMCE3. Post-translationally, sumoylated, possibly via autosumoylation.

The protein localises to the nucleus. It localises to the chromosome. The protein resides in the telomere. Its subcellular location is the PML body. The protein operates within protein modification; protein sumoylation. E3 SUMO-protein ligase component of the SMC5-SMC6 complex, a complex involved in DNA double-strand break repair by homologous recombination. Is not be required for the stability of the complex. The complex may promote sister chromatid homologous recombination by recruiting the SMC1-SMC3 cohesin complex to double-strand breaks. Acts as an E3 ligase mediating SUMO attachment to various proteins such as SMC6L1 and TSNAX, the shelterin complex subunits TERF1, TERF2, TINF2 and TERF2IP, RAD51AP1, and maybe the cohesin components RAD21 and STAG2. Required for recruitment of telomeres to PML nuclear bodies. Required for sister chromatid cohesion during prometaphase and mitotic progression. The sequence is that of E3 SUMO-protein ligase NSE2 (NSMCE2) from Bos taurus (Bovine).